The chain runs to 251 residues: SRR1-like protein (251 aa).

It belongs to the SRR1 family.

The protein resides in the cytoplasm. It is found in the nucleus. This chain is SRR1-like protein, found in Schizosaccharomyces pombe (strain 972 / ATCC 24843) (Fission yeast).